Here is a 557-residue protein sequence, read N- to C-terminus: Dihydroxy-acid dehydratase (557 aa).

Cys-50 serves as a coordination point for [2Fe-2S] cluster. Mg(2+) is bound at residue Asp-82. Cys-123 contacts [2Fe-2S] cluster. Residues Asp-124 and Lys-125 each coordinate Mg(2+). An N6-carboxylysine modification is found at Lys-125. [2Fe-2S] cluster is bound at residue Cys-195. Glu-447 contacts Mg(2+). The active-site Proton acceptor is the Ser-473.

It belongs to the IlvD/Edd family. As to quaternary structure, homodimer. The cofactor is [2Fe-2S] cluster. Mg(2+) serves as cofactor.

It carries out the reaction (2R)-2,3-dihydroxy-3-methylbutanoate = 3-methyl-2-oxobutanoate + H2O. It catalyses the reaction (2R,3R)-2,3-dihydroxy-3-methylpentanoate = (S)-3-methyl-2-oxopentanoate + H2O. It participates in amino-acid biosynthesis; L-isoleucine biosynthesis; L-isoleucine from 2-oxobutanoate: step 3/4. The protein operates within amino-acid biosynthesis; L-valine biosynthesis; L-valine from pyruvate: step 3/4. Functionally, functions in the biosynthesis of branched-chain amino acids. Catalyzes the dehydration of (2R,3R)-2,3-dihydroxy-3-methylpentanoate (2,3-dihydroxy-3-methylvalerate) into 2-oxo-3-methylpentanoate (2-oxo-3-methylvalerate) and of (2R)-2,3-dihydroxy-3-methylbutanoate (2,3-dihydroxyisovalerate) into 2-oxo-3-methylbutanoate (2-oxoisovalerate), the penultimate precursor to L-isoleucine and L-valine, respectively. The chain is Dihydroxy-acid dehydratase from Nitrosospira multiformis (strain ATCC 25196 / NCIMB 11849 / C 71).